The primary structure comprises 156 residues: ATP synthase subunit b (156 aa).

Residues A11–A31 form a helical membrane-spanning segment.

This sequence belongs to the ATPase B chain family. In terms of assembly, F-type ATPases have 2 components, F(1) - the catalytic core - and F(0) - the membrane proton channel. F(1) has five subunits: alpha(3), beta(3), gamma(1), delta(1), epsilon(1). F(0) has three main subunits: a(1), b(2) and c(10-14). The alpha and beta chains form an alternating ring which encloses part of the gamma chain. F(1) is attached to F(0) by a central stalk formed by the gamma and epsilon chains, while a peripheral stalk is formed by the delta and b chains.

It is found in the cell inner membrane. Its function is as follows. F(1)F(0) ATP synthase produces ATP from ADP in the presence of a proton or sodium gradient. F-type ATPases consist of two structural domains, F(1) containing the extramembraneous catalytic core and F(0) containing the membrane proton channel, linked together by a central stalk and a peripheral stalk. During catalysis, ATP synthesis in the catalytic domain of F(1) is coupled via a rotary mechanism of the central stalk subunits to proton translocation. In terms of biological role, component of the F(0) channel, it forms part of the peripheral stalk, linking F(1) to F(0). This is ATP synthase subunit b from Klebsiella pneumoniae (strain 342).